Here is a 158-residue protein sequence, read N- to C-terminus: Sec-independent protein translocase protein TatB (158 aa).

The chain crosses the membrane as a helical span at residues 1-21 (MFGISFSELLLVGLVALLVLG). Positions 73–158 (DEARKMFAPN…HDSSLPPRAP (86 aa)) are disordered. Residues 80–90 (APNQPSENSPE) are compositionally biased toward low complexity.

This sequence belongs to the TatB family. In terms of assembly, the Tat system comprises two distinct complexes: a TatABC complex, containing multiple copies of TatA, TatB and TatC subunits, and a separate TatA complex, containing only TatA subunits. Substrates initially bind to the TatABC complex, which probably triggers association of the separate TatA complex to form the active translocon.

The protein localises to the cell inner membrane. In terms of biological role, part of the twin-arginine translocation (Tat) system that transports large folded proteins containing a characteristic twin-arginine motif in their signal peptide across membranes. Together with TatC, TatB is part of a receptor directly interacting with Tat signal peptides. TatB may form an oligomeric binding site that transiently accommodates folded Tat precursor proteins before their translocation. This chain is Sec-independent protein translocase protein TatB, found in Pseudomonas syringae pv. syringae (strain B728a).